The chain runs to 202 residues: MQALVEAIRERGMILPGGMLKVDGLINHQLLPQLTREMGERFAAGFAPLNPNKVVTIEVSGIAPALATALALNVPLVYARKKKPITMQEPTFTAQSISRTKGGAVDLFVSSEYLGSGDRVVVIDDFLASGGTLRALAGIIALSGAELLGLGCVIEKGFEEGRAKLADLGVPILTLANILRMNEQEGIVVEAGLQDLPKQPAG.

Xanthine-binding residues include L20 and N27. 128 to 132 lines the 5-phospho-alpha-D-ribose 1-diphosphate pocket; the sequence is ASGGT. K156 contributes to the xanthine binding site.

The protein belongs to the purine/pyrimidine phosphoribosyltransferase family. Xpt subfamily. As to quaternary structure, homodimer.

The protein resides in the cytoplasm. It catalyses the reaction XMP + diphosphate = xanthine + 5-phospho-alpha-D-ribose 1-diphosphate. The protein operates within purine metabolism; XMP biosynthesis via salvage pathway; XMP from xanthine: step 1/1. Converts the preformed base xanthine, a product of nucleic acid breakdown, to xanthosine 5'-monophosphate (XMP), so it can be reused for RNA or DNA synthesis. This is Xanthine phosphoribosyltransferase from Deinococcus geothermalis (strain DSM 11300 / CIP 105573 / AG-3a).